A 357-amino-acid polypeptide reads, in one-letter code: Solute carrier family 25 member 3 (357 aa).

The N-terminal 45 residues, 1–45 (MFSSVAHLARANPFNAPHLQLVHDGLSGPRSPPAPPRRSRHLAAA), are a transit peptide targeting the mitochondrion. At 46 to 58 (AVEEYSCEFGSMK) the chain is on the mitochondrial intermembrane side. Solcar repeat units lie at residues 58 to 142 (KYYA…FKAL), 155 to 239 (WRTS…TVEA), and 256 to 334 (EQLV…VKVY). The chain crosses the membrane as a helical span at residues 59 to 81 (YYALCGFGGVLSCGLTHTAVVPL). Residues 82-116 (DLVKCRMQVDPQKYKGIFNGFSITLKEDGVRGLAK) lie on the Mitochondrial matrix side of the membrane. N6-acetyllysine is present on K94. K107 bears the N6-methyllysine mark. Residues 117 to 136 (GWAPTLIGYSMQGLCKFGFY) traverse the membrane as a helical segment. Residues 137–156 (EVFKALYSNILGEENTYLWR) are Mitochondrial intermembrane-facing. The helical transmembrane segment at 157–178 (TSLYLASSASAEFFADIALAPM) threads the bilayer. The Mitochondrial matrix portion of the chain corresponds to 179 to 213 (EAAKVRIQTQPGYANTLREAVPKMYKEEGLNAFYK). Y191 is subject to Phosphotyrosine. N6-acetyllysine is present on K204. The helical transmembrane segment at 214 to 233 (GVAPLWMRQIPYTMMKFACF) threads the bilayer. Residues 234–256 (ERTVEALYKFVVPKPRSECTKAE) are Mitochondrial intermembrane-facing. The chain crosses the membrane as a helical span at residues 257–279 (QLVVTFVAGYIAGVFCAIVSHPA). The Mitochondrial matrix segment spans residues 280 to 309 (DSVVSVLNKEKGSTASQVLQRLGFRGVWKG). The chain crosses the membrane as a helical span at residues 310 to 328 (LFARIIMIGTLTALQWFIY). The Mitochondrial intermembrane portion of the chain corresponds to 329-357 (DSVKVYFRLPRPPPPEMPESLKKKLGLTE).

It belongs to the mitochondrial carrier (TC 2.A.29) family. Interacts with PPIF; the interaction is impaired by CsA.

It localises to the mitochondrion inner membrane. The catalysed reaction is phosphate(in) + H(+)(in) = phosphate(out) + H(+)(out). In terms of biological role, inorganic ion transporter that transports phosphate or copper ions across the mitochondrial inner membrane into the matrix compartment. Mediates proton-coupled symport of phosphate ions necessary for mitochondrial oxidative phosphorylation of ADP to ATP. Transports copper ions probably in the form of anionic copper(I) complexes to maintain mitochondrial matrix copper pool and to supply copper for cytochrome C oxidase complex assembly. May also play a role in regulation of the mitochondrial permeability transition pore (mPTP). In Mus musculus (Mouse), this protein is Solute carrier family 25 member 3.